Here is a 248-residue protein sequence, read N- to C-terminus: Mitochondrial import inner membrane translocase subunit Tim21 (248 aa).

A mitochondrion-targeting transit peptide spans 1–18 (MICTFLRAVQYTEKLHRS). The segment at 67 to 98 (TQGPSPRKAKEDGSKQVSVHRSQRGGTAVPTS) is disordered. Residues 108 to 128 (FTYLIVVLFGISITGGLFYTI) form a helical membrane-spanning segment.

The protein belongs to the TIM21 family. As to quaternary structure, component of the TIM23 complex. Component of the MITRAC (mitochondrial translation regulation assembly intermediate of cytochrome c oxidase complex) complex, the core components of this complex being COA3/MITRAC12 and COX14. Interacts with COA3 and MT-CO1/COX1.

The protein resides in the mitochondrion membrane. In terms of biological role, participates in the translocation of transit peptide-containing proteins across the mitochondrial inner membrane. Also required for assembly of mitochondrial respiratory chain complex I and complex IV as component of the MITRAC (mitochondrial translation regulation assembly intermediate of cytochrome c oxidase complex) complex. Probably shuttles between the presequence translocase and respiratory-chain assembly intermediates in a process that promotes incorporation of early nuclear-encoded subunits into these complexes. The polypeptide is Mitochondrial import inner membrane translocase subunit Tim21 (TIMM21) (Homo sapiens (Human)).